The sequence spans 2591 residues: Eukaryotic translation initiation factor 2-alpha kinase PK4 (2591 aa).

At 1–16 the chain is on the cytoplasmic side; sequence MYNKGINICLNEDNKC. A helical membrane pass occupies residues 17-37; it reads IILLHIIFNKCIVSFVASHIL. Over 38–1488 the chain is Lumenal; it reads VEGKICFLNR…EFSSQKHKKS (1451 aa). The disordered stretch occupies residues 1028–1048; that stretch reads KKKRNSKKGENRNKKRKTQKR. Residues 1489–1509 form a helical membrane-spanning segment; that stretch reads WYWNIFYAITLVIVIPFIFIY. The Cytoplasmic portion of the chain corresponds to 1510–2591; that stretch reads RLFKKQTNNK…NIINGNEVDH (1082 aa). A disordered region spans residues 1781–1840; the sequence is NLNSADEENKSPYAKKYSDEKKNRSKSSKYIENTQSNNNDNTNGNMNVGNHINNDKMNNK. The span at 1813–1832 shows a compositional bias: low complexity; the sequence is NTQSNNNDNTNGNMNVGNHI. ATP contacts are provided by residues 1880–1888 and K1905; that span reads IGQGGFGSV. Disordered regions lie at residues 2123–2157 and 2183–2212; these read DNDESNGSGHSKKNDNDERKSLNNQNGIYNTGGDI and IKNTQGTSINGTINRNTISDETGTQGTNNN. The segment covering 2134–2143 has biased composition (basic and acidic residues); sequence KKNDNDERKS. In terms of domain architecture, Protein kinase spans 2181-2532; that stretch reads MTIKNTQGTS…KIKVLLDPHL (352 aa). D2369 serves as the catalytic Proton acceptor. Phosphothreonine; by autocatalysis is present on T2436. The segment covering 2558-2574 has biased composition (polar residues); that stretch reads STNPNGDIKENVNQNNL. The tract at residues 2558–2591 is disordered; the sequence is STNPNGDIKENVNQNNLVDDKGNNNIINGNEVDH. Residues 2580-2591 show a composition bias toward low complexity; it reads NNNIINGNEVDH.

Belongs to the protein kinase superfamily. Ser/Thr protein kinase family. GCN2 subfamily. May form oligomers in response to stress; oligomerization may result in catalytic activity. Interacts with BIP; the interaction is disrupted in response to stress.

It localises to the endoplasmic reticulum membrane. The catalysed reaction is L-seryl-[protein] + ATP = O-phospho-L-seryl-[protein] + ADP + H(+). It catalyses the reaction L-threonyl-[protein] + ATP = O-phospho-L-threonyl-[protein] + ADP + H(+). Its activity is regulated as follows. Dissociation from BIP and oligomerization, may results autophosphorylation and kinase activity induction. Its function is as follows. During the asexual blood stage, phosphorylates translation factor eIF2alpha in late schizonts resulting in protein translation inhibition. Plays a role in trophozoite differentiation into schizonts. The chain is Eukaryotic translation initiation factor 2-alpha kinase PK4 from Plasmodium berghei (strain Anka).